Reading from the N-terminus, the 436-residue chain is ATP-dependent protease ATPase subunit HslU (436 aa).

Residues I19, 61–66 (GVGKTE), D249, E314, and R386 contribute to the ATP site.

The protein belongs to the ClpX chaperone family. HslU subfamily. As to quaternary structure, a double ring-shaped homohexamer of HslV is capped on each side by a ring-shaped HslU homohexamer. The assembly of the HslU/HslV complex is dependent on binding of ATP.

The protein localises to the cytoplasm. Functionally, ATPase subunit of a proteasome-like degradation complex; this subunit has chaperone activity. The binding of ATP and its subsequent hydrolysis by HslU are essential for unfolding of protein substrates subsequently hydrolyzed by HslV. HslU recognizes the N-terminal part of its protein substrates and unfolds these before they are guided to HslV for hydrolysis. This is ATP-dependent protease ATPase subunit HslU from Bartonella bacilliformis (strain ATCC 35685 / KC583 / Herrer 020/F12,63).